A 147-amino-acid chain; its full sequence is MVHLTPEEKALVIGLWAKVNVKEYGGEALGRLLVVYPWTQRFFEHFGDLSSASAIMNNPKVKAHGEKVFTSFGDGLKHLEDLKGAFAELSELHCDKLHVDPENFRLLGNVLVCVLARHFGKEFSPEAQAAYQKVVAGVANALAHKYH.

The 145-residue stretch at 3 to 147 (HLTPEEKALV…VANALAHKYH (145 aa)) folds into the Globin domain. Position 51 is a phosphoserine (Ser-51). Residues His-64 and His-93 each contribute to the heme b site.

Belongs to the globin family. In terms of assembly, heterotetramer of two delta chains and two alpha chains. Red blood cells.

This is Hemoglobin subunit delta (HBD) from Trichechus manatus (Caribbean manatee).